A 178-amino-acid polypeptide reads, in one-letter code: Methyltransferase flvH (178 aa).

In terms of domain architecture, Post-SET spans 120–136; the sequence is QPFNCFCGSQNCLGLIA. 3 residues coordinate Zn(2+): C124, C126, and C131.

This sequence belongs to the class V-like SAM-binding methyltransferase superfamily.

It carries out the reaction L-lysine + 2 S-adenosyl-L-methionine = N(6),N(6)-dimethyl-L-lysine + 2 S-adenosyl-L-homocysteine + 2 H(+). The protein operates within secondary metabolite biosynthesis; terpenoid biosynthesis. Functionally, methyltransferase; part of the gene cluster that mediates the biosynthesis of flavunoidine, an alkaloidal terpenoid with a tetracyclic cage-like core connected to dimethylcadaverine via a C-N bond and acylated with 5,5-dimethyl-L-pipecolate. The tetracyclic core is synthesized by the terpene cyclase flvE and the cytochrome P450 monooxygenase flvD. The terpene cyclase flvE catalyzes the cyclization of farnesyl pyrophosphate (FPP) to form (1R,4R,5S)-(+)-acoradiene and the cytochrome P450 monooxygenase flvD is then responsible for oxidative conversion of (1R,4R,5S)-(+)-acoradiene into the tetracyclic cage present in the final product flavunoidine. In parallel, the N-methyltransferase flvH dimethylates L-lysine to give N,N-dimethyl-L-Lysin which is decarboxylated by flvG to afford dimethylcadaverine. The terpene cyclase-like protein flvF is the enzyme that attaches the dimethylcadaverine precusor at the C-7 of the tetracyclic cage to yield pre-flavunoidine. The cytochrome monooxygenase flvC hydroxylates the C-10 position of pre-flavunoidine whereas the NRPS flvI acylates the terpenoid core at the hydroxylated C-10 with dimethylpipecolate to yield final flavunoidine. The bifunctional enzyme flvA and the dehydrogenase flvB are responsible for the synthesis of the dimethylpipecolate precursor. The PLP-dependent lyase domain of flvA might use L-O-acetyl-homoserine and alpha-keto-isovalerate to form an intermediary ketone that can cyclize intramolecularly to yield an imine. The imine can be reduced by flvB to yield the 6-carboxylated pipecolate. The C-terminal alpha-KG-dependent oxygenase domain of flvA is then proposed to catalyze the decarboxylation to yield dimethylpipecolate. In Aspergillus flavus (strain ATCC 200026 / FGSC A1120 / IAM 13836 / NRRL 3357 / JCM 12722 / SRRC 167), this protein is Methyltransferase flvH.